Here is a 248-residue protein sequence, read N- to C-terminus: Uridylate kinase (248 aa).

11–14 (KISG) contributes to the ATP binding site. G53 contributes to the UMP binding site. 2 residues coordinate ATP: G54 and R58. UMP is bound by residues D74 and 135-142 (AGSPYLTT). ATP contacts are provided by T162, Y169, and D172.

The protein belongs to the UMP kinase family. As to quaternary structure, homohexamer.

Its subcellular location is the cytoplasm. The catalysed reaction is UMP + ATP = UDP + ADP. It participates in pyrimidine metabolism; CTP biosynthesis via de novo pathway; UDP from UMP (UMPK route): step 1/1. With respect to regulation, inhibited by UTP. Catalyzes the reversible phosphorylation of UMP to UDP. The chain is Uridylate kinase from Chlamydia pneumoniae (Chlamydophila pneumoniae).